Here is a 249-residue protein sequence, read N- to C-terminus: ATP synthase subunit a (249 aa).

A run of 6 helical transmembrane segments spans residues 29–49 (ASLFMVATVAAASGFLYFATS), 84–104 (FFPFVFSLFMFVLTANLLGMF), 114–134 (IIVTFALACLVIGTVIVYGFY), 140–160 (FFGIFAPSGVPKALLPLVASI), 193–213 (FVASMGALGALGVGGAVLPLI), and 216–236 (VAMTALEFLVAFLQAYVFAVL).

This sequence belongs to the ATPase A chain family. F-type ATPases have 2 components, CF(1) - the catalytic core - and CF(0) - the membrane proton channel. CF(1) has five subunits: alpha(3), beta(3), gamma(1), delta(1), epsilon(1). CF(0) has three main subunits: a(1), b(2) and c(9-12). The alpha and beta chains form an alternating ring which encloses part of the gamma chain. CF(1) is attached to CF(0) by a central stalk formed by the gamma and epsilon chains, while a peripheral stalk is formed by the delta and b chains.

The protein resides in the cell inner membrane. Functionally, key component of the proton channel; it plays a direct role in the translocation of protons across the membrane. This Agrobacterium fabrum (strain C58 / ATCC 33970) (Agrobacterium tumefaciens (strain C58)) protein is ATP synthase subunit a.